The chain runs to 318 residues: Pantothenate synthetase (318 aa).

Residue 44–51 participates in ATP binding; sequence MGALHQGH. Catalysis depends on histidine 51, which acts as the Proton donor. Glutamine 75 is a (R)-pantoate binding site. Glutamine 75 contacts beta-alanine. 161 to 164 lines the ATP pocket; it reads GEKD. Glutamine 167 provides a ligand contact to (R)-pantoate. ATP contacts are provided by residues valine 190 and 198–201; that span reads LSSR. The disordered stretch occupies residues 295–318; the sequence is DGHPNLDSQPEPAGTDPALLPPAR.

It belongs to the pantothenate synthetase family. As to quaternary structure, homodimer.

Its subcellular location is the cytoplasm. It catalyses the reaction (R)-pantoate + beta-alanine + ATP = (R)-pantothenate + AMP + diphosphate + H(+). Its pathway is cofactor biosynthesis; (R)-pantothenate biosynthesis; (R)-pantothenate from (R)-pantoate and beta-alanine: step 1/1. Catalyzes the condensation of pantoate with beta-alanine in an ATP-dependent reaction via a pantoyl-adenylate intermediate. The protein is Pantothenate synthetase of Nocardia farcinica (strain IFM 10152).